The sequence spans 488 residues: Arginine biosynthesis bifunctional protein ArgJ, mitochondrial (488 aa).

Substrate is bound by residues Thr-227, Lys-250, Thr-261, Glu-340, Asn-483, and Ser-488. The active-site Nucleophile is Thr-261.

This sequence belongs to the ArgJ family. Heterodimer of an alpha and a beta chain. The alpha and beta chains are autoproteolytically processed from a single precursor protein within the mitochondrion.

The protein localises to the mitochondrion matrix. It catalyses the reaction N(2)-acetyl-L-ornithine + L-glutamate = N-acetyl-L-glutamate + L-ornithine. The catalysed reaction is L-glutamate + acetyl-CoA = N-acetyl-L-glutamate + CoA + H(+). Its pathway is amino-acid biosynthesis; L-arginine biosynthesis; L-ornithine and N-acetyl-L-glutamate from L-glutamate and N(2)-acetyl-L-ornithine (cyclic): step 1/1. The protein operates within amino-acid biosynthesis; L-arginine biosynthesis; N(2)-acetyl-L-ornithine from L-glutamate: step 1/4. Its function is as follows. Catalyzes two activities which are involved in the cyclic version of arginine biosynthesis: the synthesis of acetylglutamate from glutamate and acetyl-CoA, and of ornithine by transacetylation between acetylornithine and glutamate. The protein is Arginine biosynthesis bifunctional protein ArgJ, mitochondrial of Thalassiosira pseudonana (Marine diatom).